The following is a 469-amino-acid chain: Neuraminidase (469 aa).

Residues M1–K6 lie on the Intravirion side of the membrane. A helical membrane pass occupies residues I7–G27. Residues G11–W33 form an involved in apical transport and lipid raft association region. At N28 to K469 the chain is on the virion surface side. Residues H36 to S90 are hypervariable stalk region. Residues N50, N58, N63, N68, and N88 are each glycosylated (N-linked (GlcNAc...) asparagine; by host). The tract at residues L91 to K469 is head of neuraminidase. Cystine bridges form between C92-C417, C124-C129, C184-C231, C233-C238, C279-C292, C281-C290, C318-C335, and C421-C446. R118 is a substrate binding site. N146 carries an N-linked (GlcNAc...) asparagine; by host glycan. D151 serves as the catalytic Proton donor/acceptor. R152 contacts substrate. The N-linked (GlcNAc...) asparagine; by host glycan is linked to N235. E277–E278 lines the substrate pocket. R293 lines the substrate pocket. D294, G298, and D324 together coordinate Ca(2+). Residue R368 coordinates substrate. A glycan (N-linked (GlcNAc...) asparagine; by host) is linked at N386. The Nucleophile role is filled by Y402.

This sequence belongs to the glycosyl hydrolase 34 family. In terms of assembly, homotetramer. The cofactor is Ca(2+). In terms of processing, N-glycosylated.

Its subcellular location is the virion membrane. It is found in the host apical cell membrane. It catalyses the reaction Hydrolysis of alpha-(2-&gt;3)-, alpha-(2-&gt;6)-, alpha-(2-&gt;8)- glycosidic linkages of terminal sialic acid residues in oligosaccharides, glycoproteins, glycolipids, colominic acid and synthetic substrates.. With respect to regulation, inhibited by the neuraminidase inhibitors zanamivir (Relenza) and oseltamivir (Tamiflu). These drugs interfere with the release of progeny virus from infected cells and are effective against all influenza strains. Resistance to neuraminidase inhibitors is quite rare. In terms of biological role, catalyzes the removal of terminal sialic acid residues from viral and cellular glycoconjugates. Cleaves off the terminal sialic acids on the glycosylated HA during virus budding to facilitate virus release. Additionally helps virus spread through the circulation by further removing sialic acids from the cell surface. These cleavages prevent self-aggregation and ensure the efficient spread of the progeny virus from cell to cell. Otherwise, infection would be limited to one round of replication. Described as a receptor-destroying enzyme because it cleaves a terminal sialic acid from the cellular receptors. May facilitate viral invasion of the upper airways by cleaving the sialic acid moieties on the mucin of the airway epithelial cells. Likely to plays a role in the budding process through its association with lipid rafts during intracellular transport. May additionally display a raft-association independent effect on budding. Plays a role in the determination of host range restriction on replication and virulence. Sialidase activity in late endosome/lysosome traffic seems to enhance virus replication. This chain is Neuraminidase, found in Aves (Cat).